The sequence spans 546 residues: Mercuric reductase (546 aa).

Residues 2 to 66 (NKFKVNISGM…AIDEANYQAG (65 aa)) enclose the HMA domain. The a metal cation site is built by cysteine 13 and cysteine 16. FAD is bound by residues alanine 96, glycine 116, and threonine 121. An intrachain disulfide couples cysteine 122 to cysteine 127. Residues lysine 131 and alanine 195 each contribute to the FAD site. Residues 256–263 (GSGYIGME) and glycine 346 contribute to the NAD(+) site. Residues aspartate 387 and valine 395 each contribute to the FAD site. Residues cysteine 543 and cysteine 544 each coordinate Hg(2+).

This sequence belongs to the class-I pyridine nucleotide-disulfide oxidoreductase family. As to quaternary structure, homodimer. It depends on FAD as a cofactor.

The enzyme catalyses Hg + NADP(+) + H(+) = Hg(2+) + NADPH. Uses NADPH as the preferred electron donor, but shows slight activity with NADH as well. Inhibited by Cu(2+), Cd(2+), Zn(2+) and Co(2+), with Cu(2+) showing the strongest inhibition. Enzyme activity is enhanced by b-mercaptoethanol and NaCl up to concentrations of 500 uM and 100 mM respectively, followed by inhibition at higher concentrations. Resistance to Hg(2+) in bacteria appears to be governed by a specialized system which includes mercuric reductase. MerA protein is responsible for volatilizing mercury as Hg(0). Catalyzes reduction of Hg(2+) to elemental Hg, which is volatile and can diffuse out of cells passively. Plays a pivotal role in mercury resistance and cell protection. The chain is Mercuric reductase from Lysinibacillus sphaericus (Bacillus sphaericus).